Consider the following 201-residue polypeptide: Small ribosomal subunit protein uS4c (201 aa).

The interval 20–43 (GLTSKRPRAGSDLRNQSRSGKRSQ) is disordered. An S4 RNA-binding domain is found at 89-149 (MRLDNILFRL…NEQKSRALIQ (61 aa)).

The protein belongs to the universal ribosomal protein uS4 family. In terms of assembly, part of the 30S ribosomal subunit. Contacts protein S5. The interaction surface between S4 and S5 is involved in control of translational fidelity.

The protein resides in the plastid. The protein localises to the chloroplast. One of the primary rRNA binding proteins, it binds directly to 16S rRNA where it nucleates assembly of the body of the 30S subunit. Its function is as follows. With S5 and S12 plays an important role in translational accuracy. The polypeptide is Small ribosomal subunit protein uS4c (rps4) (Vitis vinifera (Grape)).